The sequence spans 242 residues: Zinc import ATP-binding protein ZnuC (242 aa).

Residues 24 to 241 enclose the ABC transporter domain; that stretch reads INVKDLSFAY…EKFLKMFSSY (218 aa). Residue 56 to 63 coordinates ATP; sequence GPNGGGKT.

It belongs to the ABC transporter superfamily. Zinc importer (TC 3.A.1.15.5) family. In terms of assembly, the complex is composed of two ATP-binding proteins (ZnuC), two transmembrane proteins (ZnuB) and a solute-binding protein (ZnuA).

It is found in the cell inner membrane. The enzyme catalyses Zn(2+)(out) + ATP(in) + H2O(in) = Zn(2+)(in) + ADP(in) + phosphate(in) + H(+)(in). In terms of biological role, part of the ABC transporter complex ZnuABC involved in zinc import. Responsible for energy coupling to the transport system. This chain is Zinc import ATP-binding protein ZnuC, found in Ehrlichia ruminantium (strain Gardel).